Consider the following 833-residue polypeptide: MSNQIYSARYSGVDVYEFIHSTGSIMKRKKDDWVNATHILKAANFAKAKRTRILEKEVLKETHEKVQGGFGKYQGTWVPLNIAKQLAEKFSVYDQLKPLFDFTQTDGSASPPPAPKHHHASKVDRKKAIRSASTSAIMETKRNNKKAEENQFQSSKILGNPTAAPRKRGRPVGSTRGSRRKLGVNLQRSQSDMGFPRPAIPNSSISTTQLPSIRSTMGPQSPTLGILEEERHDSRQQQPQQNNSAQFKEIDLEDGLSSDVEPSQQLQQVFNQNTGFVPQQQSSLIQTQQTESMATSVSSSPSLPTSPGDFADSNPFEERFPGGGTSPIISMIPRYPVTSRPQTSDINDKVNKYLSKLVDYFISNEMKSNKSLPQVLLHPPPHSAPYIDAPIDPELHTAFHWACSMGNLPIAEALYEAGTSIRSTNSQGQTPLMRSSLFHNSYTRRTFPRIFQLLHETVFDIDSQSQTVIHHIVKRKSTTPSAVYYLDVVLSKIKDFSPQYRIELLLNTQDKNGDTALHIASKNGDVVFFNTLVKMGALTTISNKEGLTANEIMNQQYEQMMIQNGTNQHVNSSNTDLNIHVNTNNIETKNDVNSMVIMSPVSPSDYITYPSQIATNISRNIPNVVNSMKQMASIYNDLHEQHDNEIKSLQKTLKSISKTKIQVSLKTLEVLKESSKDENGEAQTNDDFEILSRLQEQNTKKLRKRLIRYKRLIKQKLEYRQTVLLNKLIEDETQATTNNTVEKDNNTLERLELAQELTMLQLQRKNKLSSLVKKFEDNAKIHKYRRIIREGTEMNIEEVDSSLDVILQTLIANNNKNKGAEQIITISNANSHA.

The HTH APSES-type domain occupies 5-111 (IYSARYSGVD…FTQTDGSASP (107 aa)). The H-T-H motif DNA-binding region spans 36–57 (ATHILKAANFAKAKRTRILEKE). 2 disordered regions span residues 104 to 223 (QTDG…QSPT) and 280 to 329 (QQSS…SPII). Ser110 is modified (phosphoserine). Basic residues predominate over residues 115-129 (PKHHHASKVDRKKAI). The span at 139 to 149 (ETKRNNKKAEE) shows a compositional bias: basic and acidic residues. The segment covering 201–223 (PNSSISTTQLPSIRSTMGPQSPT) has biased composition (polar residues). A compositionally biased stretch (low complexity) spans 280–307 (QQSSLIQTQQTESMATSVSSSPSLPTSP). Position 325 is a phosphothreonine (Thr325). Phosphoserine is present on residues Ser326 and Ser330. 2 ANK repeats span residues 394–423 (ELHTAFHWACSMGNLPIAEALYEAGTSIRS) and 512–541 (NGDTALHIASKNGDVVFFNTLVKMGALTTI). The residue at position 827 (Ser827) is a Phosphoserine.

Component of the transcription complex MCB-binding factor (MBF) composed of SWI6 and MBP1. Interacts with MSA1.

The protein resides in the nucleus. In terms of biological role, binds to MCB elements (Mlu I cell cycle box) found in the promoter of most DNA synthesis genes. Transcriptional activation by MBF has an important role in the transition from G1 to S phase. It may have a dual role in that it behaves as an activator of transcription at the G1-S boundary and as a repressor during other stages of the cell cycle. The polypeptide is Transcription factor MBP1 (MBP1) (Saccharomyces cerevisiae (strain ATCC 204508 / S288c) (Baker's yeast)).